We begin with the raw amino-acid sequence, 571 residues long: Urease subunit alpha (571 aa).

The Urease domain occupies 134–571 (GAIDTHIHFI…LPMAQRYFLF (438 aa)). The Ni(2+) site is built by His-139, His-141, and Lys-222. Lys-222 carries the N6-carboxylysine modification. Residue His-224 coordinates substrate. Residues His-251 and His-277 each coordinate Ni(2+). Residue His-325 is the Proton donor of the active site. Asp-365 lines the Ni(2+) pocket.

It belongs to the metallo-dependent hydrolases superfamily. Urease alpha subunit family. Heterotrimer of UreA (gamma), UreB (beta) and UreC (alpha) subunits. Three heterotrimers associate to form the active enzyme. Requires Ni cation as cofactor. Carboxylation allows a single lysine to coordinate two nickel ions.

The protein localises to the cytoplasm. It carries out the reaction urea + 2 H2O + H(+) = hydrogencarbonate + 2 NH4(+). Its pathway is nitrogen metabolism; urea degradation; CO(2) and NH(3) from urea (urease route): step 1/1. The polypeptide is Urease subunit alpha (Bordetella pertussis (strain Tohama I / ATCC BAA-589 / NCTC 13251)).